The following is a 536-amino-acid chain: Phosphoenolpyruvate carboxykinase (ATP) (536 aa).

Residues R61, Y195, and K201 each coordinate substrate. ATP is bound by residues K201, H220, and 236 to 244 (GLSGTGKTT). K201 and H220 together coordinate Mn(2+). D257 is a binding site for Mn(2+). Residues E285, R322, and T447 each coordinate ATP. R322 provides a ligand contact to substrate.

The protein belongs to the phosphoenolpyruvate carboxykinase (ATP) family. Mn(2+) serves as cofactor.

It localises to the cytoplasm. The enzyme catalyses oxaloacetate + ATP = phosphoenolpyruvate + ADP + CO2. It functions in the pathway carbohydrate biosynthesis; gluconeogenesis. Involved in the gluconeogenesis. Catalyzes the conversion of oxaloacetate (OAA) to phosphoenolpyruvate (PEP) through direct phosphoryl transfer between the nucleoside triphosphate and OAA. The sequence is that of Phosphoenolpyruvate carboxykinase (ATP) from Rhizobium etli (strain ATCC 51251 / DSM 11541 / JCM 21823 / NBRC 15573 / CFN 42).